A 252-amino-acid chain; its full sequence is Agamous-like MADS-box protein AGL6 (252 aa).

Residues 3-57 enclose the MADS-box domain; that stretch reads RGRVEMKRIENKINRQVTFSKRRNGLLKKAYELSVLCDAEVALIIFSSRGKLYEF. Positions 86-176 constitute a K-box domain; it reads TQSWCQEVTK…KIKFETEGHA (91 aa). Residues 91 to 173 are a coiled coil; that stretch reads QEVTKLKSKY…KQLKIKFETE (83 aa).

Forms a heterodimer with AGAMOUS. Interacts with AGL15 and AGL16. Preferentially expressed in flowers.

It localises to the nucleus. Functionally, probable transcription factor. Forms a heterodimer via the K-box domain with AG, that could be involved in genes regulation during floral meristem development. The protein is Agamous-like MADS-box protein AGL6 (AGL6) of Arabidopsis thaliana (Mouse-ear cress).